Consider the following 887-residue polypeptide: Kinesin-like protein KIF20A (887 aa).

N-acetylserine is present on S2. A phosphoserine mark is found at S7, S14, and S21. Positions 63–506 (KVKVYLRIRP…AKFSALASQL (444 aa)) constitute a Kinesin motor domain. 159–166 (GVTNSGKT) is an ATP binding site. Residue S527 is modified to Phosphoserine; by PLK1. The interval 527–553 (SPQVGPGLEKEDKADSDLEDSPEDEAD) is disordered. Positions 543–553 (DLEDSPEDEAD) are enriched in acidic residues. Positions 559 to 804 (KEELLQVVEA…VLVKLDLQKK (246 aa)) form a coiled coil. A phosphoserine mark is found at S683 and S823. The segment at 805-887 (AACIAEQYHT…LLKSPFGKKY (83 aa)) is globular. Positions 826–875 (KRLGANQENQQPNHQPPGKKPFLRNLLPRTPTCQSSTDSSPYARILRSRH) are disordered. At T855 the chain carries Phosphothreonine. The span at 856 to 865 (PTCQSSTDSS) shows a compositional bias: polar residues. Phosphoserine occurs at positions 865, 876, and 881.

The protein belongs to the TRAFAC class myosin-kinesin ATPase superfamily. Kinesin family. Phosphorylated by PLK1 at Ser-527 during mitosis, creating a docking site for PLK1 and recruiting PLK1 at central spindle. As to expression, ubiquitously expressed, with highest levels in spleen and testis.

It is found in the golgi apparatus. It localises to the cytoplasm. The protein resides in the cytoskeleton. Its subcellular location is the spindle. Functionally, mitotic kinesin required for chromosome passenger complex (CPC)-mediated cytokinesis. Following phosphorylation by PLK1, involved in recruitment of PLK1 to the central spindle. Interacts with guanosine triphosphate (GTP)-bound forms of RAB6A and RAB6B. May act as a motor required for the retrograde RAB6 regulated transport of Golgi membranes and associated vesicles along microtubules. Has a microtubule plus end-directed motility. This is Kinesin-like protein KIF20A (Kif20a) from Mus musculus (Mouse).